The following is a 178-amino-acid chain: Large ribosomal subunit protein uL6 (178 aa).

This sequence belongs to the universal ribosomal protein uL6 family. In terms of assembly, part of the 50S ribosomal subunit.

Functionally, this protein binds to the 23S rRNA, and is important in its secondary structure. It is located near the subunit interface in the base of the L7/L12 stalk, and near the tRNA binding site of the peptidyltransferase center. This chain is Large ribosomal subunit protein uL6, found in Francisella tularensis subsp. tularensis (strain WY96-3418).